The primary structure comprises 353 residues: Probable peptidoglycan glycosyltransferase FtsW (353 aa).

8 helical membrane passes run 26 to 46 (IFYFFLIFLLSFILLRIPMSF), 53 to 73 (LILIISIFLLTIVLLIGKSVH), 115 to 135 (FWGFLKPITIIIIQSVLLLAE), 137 to 157 (DLGTVIVLFLTTLSVLFLSGV), 162 to 182 (FFIIIFFVTLIITALVLFEPY), 242 to 262 (IIGEELGYIGCFLILLMIFFI), 288 to 308 (IGLWFSFQTLINIGAVTGILP), and 314 to 334 (LPLISYGGSSLIVNLMAICIL).

The protein belongs to the SEDS family. FtsW subfamily.

It localises to the cell inner membrane. It catalyses the reaction [GlcNAc-(1-&gt;4)-Mur2Ac(oyl-L-Ala-gamma-D-Glu-L-Lys-D-Ala-D-Ala)](n)-di-trans,octa-cis-undecaprenyl diphosphate + beta-D-GlcNAc-(1-&gt;4)-Mur2Ac(oyl-L-Ala-gamma-D-Glu-L-Lys-D-Ala-D-Ala)-di-trans,octa-cis-undecaprenyl diphosphate = [GlcNAc-(1-&gt;4)-Mur2Ac(oyl-L-Ala-gamma-D-Glu-L-Lys-D-Ala-D-Ala)](n+1)-di-trans,octa-cis-undecaprenyl diphosphate + di-trans,octa-cis-undecaprenyl diphosphate + H(+). It participates in cell wall biogenesis; peptidoglycan biosynthesis. Functionally, peptidoglycan polymerase that is essential for cell division. The protein is Probable peptidoglycan glycosyltransferase FtsW of Buchnera aphidicola subsp. Schizaphis graminum (strain Sg).